Consider the following 140-residue polypeptide: Desampylase (140 aa).

The region spanning 13–133 is the MPN domain; it reads TLIIPQHYLR…WILSEKNKIS (121 aa). The active-site Proton donor/acceptor is E34. Residues H88, H90, and D101 each coordinate Zn(2+). The short motif at 88–101 is the JAMM motif element; it reads HSHIACPPIPSGKD.

The protein belongs to the peptidase M67B family. In terms of assembly, exists in two major states: monomer and homodimer. Both conformational states are catalytically active. Zn(2+) is required as a cofactor. Post-translationally, the disulfide bridge probably stabilizes the PfJAMM1 homodimer at the optimal growth temperature of the hyperthermophile.

It catalyses the reaction an N(6)-[small archaeal modifier protein]-[protein]-L-lysine + H2O = a [protein]-L-lysine + a [small archaeal modifier protein].. Its activity is regulated as follows. Inhibited by EDTA in vitro. Functionally, metalloprotease that displays desampylase (DSAMP) activity, cleaving ubiquitin-like small archaeal modifier proteins (SAMP1, SAMP2 and SAMP3) from protein conjugates (isopeptide- and linear-linked). Thus, likely regulates sampylation and the pools of 'free' SAMP available for protein modification. In vitro, is also able to cleave non-physiological ubiquitin (Ub) substrates, such as 'Met1-', 'Lys48-', and 'Lys63'-linked Ub dimers (Ub2), and to remove Ub tags from diverse proteins. In Pyrococcus furiosus (strain ATCC 43587 / DSM 3638 / JCM 8422 / Vc1), this protein is Desampylase.